Here is an 872-residue protein sequence, read N- to C-terminus: G-type lectin S-receptor-like serine/threonine-protein kinase At5g35370 (872 aa).

The signal sequence occupies residues Met-1–Ser-26. The Extracellular portion of the chain corresponds to Ile-27–Pro-443. Residues Asn-33, Asn-148, and Asn-239 are each glycosylated (N-linked (GlcNAc...) asparagine). In terms of domain architecture, Bulb-type lectin spans Thr-35–Asp-156. One can recognise an EGF-like; atypical domain in the interval Pro-283–Lys-322. Disulfide bonds link Cys-287-Cys-299 and Cys-293-Cys-310. Asn-303, Asn-307, Asn-342, Asn-379, and Asn-389 each carry an N-linked (GlcNAc...) asparagine glycan. Residues Cys-338 to Ser-423 enclose the PAN domain. Intrachain disulfides connect Cys-372/Cys-394 and Cys-376/Cys-382. A helical transmembrane segment spans residues Val-444–Leu-464. Over Trp-465–Arg-872 the chain is Cytoplasmic. A Protein kinase domain is found at Glu-515–Met-814. Residues Ile-521–Val-529 and Lys-543 each bind ATP. Residues Gly-603–Thr-620 form a caM-binding region. Asp-639 serves as the catalytic Proton acceptor. Ser-656 carries the post-translational modification Phosphoserine. Thr-673 is subject to Phosphothreonine. Phosphoserine occurs at positions 716 and 859. Residues Gln-836 to Arg-872 are disordered. Positions Ser-851–Ser-861 are enriched in low complexity. Residues Tyr-862–Arg-872 show a composition bias toward polar residues.

Belongs to the protein kinase superfamily. Ser/Thr protein kinase family.

The protein localises to the cell membrane. The catalysed reaction is L-seryl-[protein] + ATP = O-phospho-L-seryl-[protein] + ADP + H(+). The enzyme catalyses L-threonyl-[protein] + ATP = O-phospho-L-threonyl-[protein] + ADP + H(+). The polypeptide is G-type lectin S-receptor-like serine/threonine-protein kinase At5g35370 (Arabidopsis thaliana (Mouse-ear cress)).